Reading from the N-terminus, the 85-residue chain is U4-theraphotoxin-Hhn1g (85 aa).

A signal peptide spans Met1–Ala22. A propeptide spanning residues Glu23–Arg48 is cleaved from the precursor. 3 disulfides stabilise this stretch: Cys52–Cys66, Cys56–Cys77, and Cys71–Cys82.

This sequence belongs to the neurotoxin 12 (Hwtx-2) family. 02 (Hwtx-2) subfamily. As to expression, expressed by the venom gland.

It localises to the secreted. In terms of biological role, postsynaptic neurotoxin. The chain is U4-theraphotoxin-Hhn1g from Cyriopagopus hainanus (Chinese bird spider).